The primary structure comprises 224 residues: Uracil phosphoribosyltransferase (224 aa).

Arg92 contributes to the 5-phospho-alpha-D-ribose 1-diphosphate binding site. Lys109 lines the GTP pocket. Residues Arg117 and 145 to 153 (DPMLATGGT) contribute to the 5-phospho-alpha-D-ribose 1-diphosphate site. Uracil-binding positions include Ile210 and 215 to 217 (GDA). Asp216 serves as a coordination point for 5-phospho-alpha-D-ribose 1-diphosphate.

It belongs to the UPRTase family. The cofactor is Mg(2+).

The enzyme catalyses UMP + diphosphate = 5-phospho-alpha-D-ribose 1-diphosphate + uracil. It functions in the pathway pyrimidine metabolism; UMP biosynthesis via salvage pathway; UMP from uracil: step 1/1. Allosterically activated by GTP. Functionally, catalyzes the conversion of uracil and 5-phospho-alpha-D-ribose 1-diphosphate (PRPP) to UMP and diphosphate. The protein is Uracil phosphoribosyltransferase (UPP) of Nicotiana tabacum (Common tobacco).